The primary structure comprises 105 residues: Malonate decarboxylase acyl carrier protein (105 aa).

At S28 the chain carries O-(phosphoribosyl dephospho-coenzyme A)serine.

The protein belongs to the MdcC family. Covalently binds the prosthetic group of malonate decarboxylase.

It localises to the cytoplasm. Subunit of malonate decarboxylase, it is an acyl carrier protein to which acetyl and malonyl thioester residues are bound via a 2'-(5''-phosphoribosyl)-3'-dephospho-CoA prosthetic group and turn over during the catalytic mechanism. This is Malonate decarboxylase acyl carrier protein from Bradyrhizobium diazoefficiens (strain JCM 10833 / BCRC 13528 / IAM 13628 / NBRC 14792 / USDA 110).